Here is a 151-residue protein sequence, read N- to C-terminus: Transcriptional regulator MraZ (151 aa).

SpoVT-AbrB domains follow at residues 5-52 (ANAI…PLDE) and 81-124 (AVDL…DEDA).

It belongs to the MraZ family. Forms oligomers.

It localises to the cytoplasm. The protein resides in the nucleoid. The sequence is that of Transcriptional regulator MraZ from Pseudomonas fluorescens (strain ATCC BAA-477 / NRRL B-23932 / Pf-5).